The chain runs to 269 residues: Zinc transporter ZupT (269 aa).

The next 8 helical transmembrane spans lie at 5–25 (VLLA…GSLI), 38–58 (SLAL…EIFV), 75–95 (WMTI…DKFI), 125–145 (MGIF…IATF), 158–178 (IAIA…VPIF), 190–210 (LSFL…LLLM), 212–232 (FLTD…MVFI), and 249–269 (LSMY…VLLV). Positions 137 and 140 each coordinate Fe(2+). Zn(2+) contacts are provided by Glu140 and His165. The Fe(2+) site is built by Asn166, Glu169, and Glu198. Glu169 is a binding site for Zn(2+).

The protein belongs to the ZIP transporter (TC 2.A.5) family. ZupT subfamily.

The protein localises to the cell membrane. It carries out the reaction Zn(2+)(in) = Zn(2+)(out). In terms of biological role, mediates zinc uptake. May also transport other divalent cations. The chain is Zinc transporter ZupT from Lysinibacillus sphaericus (strain C3-41).